Consider the following 330-residue polypeptide: Geranylgeranyl diphosphate synthase (330 aa).

Residues Lys-43, Arg-46, and His-75 each contribute to the isopentenyl diphosphate site. 2 residues coordinate Mg(2+): Asp-82 and Asp-86. Residue Arg-91 coordinates an all-trans-polyprenyl diphosphate. Arg-92 is an isopentenyl diphosphate binding site. Residues Lys-175, Thr-176, Gln-213, Lys-230, and Lys-240 each coordinate an all-trans-polyprenyl diphosphate.

Belongs to the FPP/GGPP synthase family. Requires Mg(2+) as cofactor.

The enzyme catalyses isopentenyl diphosphate + (2E,6E)-farnesyl diphosphate = (2E,6E,10E)-geranylgeranyl diphosphate + diphosphate. The protein operates within isoprenoid biosynthesis; geranylgeranyl diphosphate biosynthesis; geranylgeranyl diphosphate from farnesyl diphosphate and isopentenyl diphosphate: step 1/1. Catalyzes the condensation of isopentenyl pyrophosphate with the allylic pyrophosphates to yield geranylgeranyl diphosphate (GGPP) which is a precursor of the ether-linked lipids. It is able to use dimethylallyl diphosphate (DMAPP), geranyl diphosphate (GPP), and (all-E)-geranyl diphosphate (E-FPP) as an allylic substrate. The sequence is that of Geranylgeranyl diphosphate synthase (gds) from Sulfolobus acidocaldarius (strain ATCC 33909 / DSM 639 / JCM 8929 / NBRC 15157 / NCIMB 11770).